Consider the following 304-residue polypeptide: Uricase (304 aa).

A2 carries the N-acetylalanine modification. 2 positions are modified to N6-acetyllysine; alternate: K10 and K23. N6-succinyllysine; alternate is present on residues K10 and K23. The Charge relay system role is filled by K23. K27 and K36 each carry N6-acetyllysine. Residues S39 and S63 each carry the phosphoserine modification. Catalysis depends on T68, which acts as the Charge relay system. Residues T68 and D69 each contribute to the urate site. N6-acetyllysine is present on residues K118, K122, and K164. F170 provides a ligand contact to urate. Residues K175 and K185 each carry the N6-acetyllysine modification. Residue R187 participates in urate binding. N6-acetyllysine; alternate occurs at positions 221 and 228. N6-succinyllysine; alternate is present on residues K221 and K228. Position 232 is a phosphoserine (S232). 3 residues coordinate urate: V235, Q236, and N262. H264 functions as the Charge relay system in the catalytic mechanism. K278 carries the N6-acetyllysine modification. Y289 is subject to Phosphotyrosine. A Microbody targeting signal motif is present at residues 302–304; that stretch reads SRL.

The protein belongs to the uricase family. In terms of assembly, homotetramer.

Its subcellular location is the peroxisome. It carries out the reaction urate + O2 + H2O = 5-hydroxyisourate + H2O2. The protein operates within purine metabolism; urate degradation; (S)-allantoin from urate: step 1/3. In terms of biological role, catalyzes the oxidation of uric acid to 5-hydroxyisourate, which is further processed to form (S)-allantoin. In Sus scrofa (Pig), this protein is Uricase (UOX).